The chain runs to 626 residues: Miltiradiene synthase KSL1, chloroplastic (626 aa).

The transit peptide at Met1–Met51 directs the protein to the chloroplast. Asp329, Asp333, Asn473, and Glu481 together coordinate Mg(2+). A DDXXD motif motif is present at residues Asp329–Asp333.

This sequence belongs to the terpene synthase family. Requires Mg(2+) as cofactor. In terms of tissue distribution, highly expressed in roots, and, at low levels, in stems and leaves.

It localises to the plastid. It is found in the chloroplast. It catalyses the reaction (+)-copalyl diphosphate = miltiradiene + diphosphate. Its pathway is secondary metabolite biosynthesis; terpenoid biosynthesis. Functionally, involved in the biosynthesis of ent-kaurene diterpenoids natural products such as oridonin, miltiradiene, eriocalyxin B and nezukol, known to exhibit antitumor, anti-inflammatory and antibacterial activities. Catalyzes the conversion of (+)-copalyl diphosphate ((+)-CPP) to miltiradiene. The sequence is that of Miltiradiene synthase KSL1, chloroplastic from Isodon rubescens (Rabdosia rubescens).